A 60-amino-acid chain; its full sequence is Large ribosomal subunit protein uL30 (60 aa).

Belongs to the universal ribosomal protein uL30 family. As to quaternary structure, part of the 50S ribosomal subunit.

This chain is Large ribosomal subunit protein uL30, found in Limosilactobacillus fermentum (strain NBRC 3956 / LMG 18251) (Lactobacillus fermentum).